A 131-amino-acid chain; its full sequence is Phosphoribosyl-AMP cyclohydrolase (131 aa).

A Mg(2+)-binding site is contributed by Asp76. Cys77 lines the Zn(2+) pocket. The Mg(2+) site is built by Asp78 and Asp80. Residues Cys94 and Cys101 each contribute to the Zn(2+) site.

The protein belongs to the PRA-CH family. In terms of assembly, homodimer. Mg(2+) is required as a cofactor. It depends on Zn(2+) as a cofactor.

It is found in the cytoplasm. It carries out the reaction 1-(5-phospho-beta-D-ribosyl)-5'-AMP + H2O = 1-(5-phospho-beta-D-ribosyl)-5-[(5-phospho-beta-D-ribosylamino)methylideneamino]imidazole-4-carboxamide. Its pathway is amino-acid biosynthesis; L-histidine biosynthesis; L-histidine from 5-phospho-alpha-D-ribose 1-diphosphate: step 3/9. Its function is as follows. Catalyzes the hydrolysis of the adenine ring of phosphoribosyl-AMP. This Stutzerimonas stutzeri (strain A1501) (Pseudomonas stutzeri) protein is Phosphoribosyl-AMP cyclohydrolase.